We begin with the raw amino-acid sequence, 257 residues long: NAD-capped RNA hydrolase NudC (257 aa).

Residues lysine 27 and arginine 71 each contribute to the substrate site. Zn(2+)-binding residues include cysteine 100 and cysteine 103. Residue glutamate 113 coordinates substrate. Residues cysteine 118 and cysteine 121 each coordinate Zn(2+). Tyrosine 126 contacts substrate. A Nudix hydrolase domain is found at 127–251 (PQIAPCIIVG…IARRLIEDTI (125 aa)). 3 residues coordinate a divalent metal cation: alanine 160, glutamate 176, and glutamate 180. The Nudix box motif lies at 161–182 (GFVEVGETLEEAVVREVMEESN). 194 to 201 (QPWPFPHS) contributes to the substrate binding site. Residue glutamate 221 coordinates a divalent metal cation. Residue alanine 243 coordinates substrate.

The protein belongs to the Nudix hydrolase family. NudC subfamily. Homodimer. The cofactor is Mg(2+). Mn(2+) serves as cofactor. It depends on Zn(2+) as a cofactor.

The enzyme catalyses a 5'-end NAD(+)-phospho-ribonucleoside in mRNA + H2O = a 5'-end phospho-adenosine-phospho-ribonucleoside in mRNA + beta-nicotinamide D-ribonucleotide + 2 H(+). It catalyses the reaction NAD(+) + H2O = beta-nicotinamide D-ribonucleotide + AMP + 2 H(+). It carries out the reaction NADH + H2O = reduced beta-nicotinamide D-ribonucleotide + AMP + 2 H(+). MRNA decapping enzyme that specifically removes the nicotinamide adenine dinucleotide (NAD) cap from a subset of mRNAs by hydrolyzing the diphosphate linkage to produce nicotinamide mononucleotide (NMN) and 5' monophosphate mRNA. The NAD-cap is present at the 5'-end of some mRNAs and stabilizes RNA against 5'-processing. Has preference for mRNAs with a 5'-end purine. Catalyzes the hydrolysis of a broad range of dinucleotide pyrophosphates. The protein is NAD-capped RNA hydrolase NudC of Photorhabdus laumondii subsp. laumondii (strain DSM 15139 / CIP 105565 / TT01) (Photorhabdus luminescens subsp. laumondii).